The chain runs to 154 residues: Ribonuclease H (154 aa).

The region spanning 1-142 (MRKQIEIFTD…CDELAKQGAE (142 aa)) is the RNase H type-1 domain. The Mg(2+) site is built by Asp10, Glu48, Asp70, and Asp134.

Belongs to the RNase H family. In terms of assembly, monomer. Mg(2+) is required as a cofactor.

Its subcellular location is the cytoplasm. The catalysed reaction is Endonucleolytic cleavage to 5'-phosphomonoester.. Functionally, endonuclease that specifically degrades the RNA of RNA-DNA hybrids. This is Ribonuclease H from Actinobacillus succinogenes (strain ATCC 55618 / DSM 22257 / CCUG 43843 / 130Z).